A 118-amino-acid polypeptide reads, in one-letter code: Large ribosomal subunit protein uL24 (118 aa).

The protein belongs to the universal ribosomal protein uL24 family. In terms of assembly, part of the 50S ribosomal subunit.

Functionally, one of two assembly initiator proteins, it binds directly to the 5'-end of the 23S rRNA, where it nucleates assembly of the 50S subunit. In terms of biological role, one of the proteins that surrounds the polypeptide exit tunnel on the outside of the subunit. The chain is Large ribosomal subunit protein uL24 from Prochlorococcus marinus (strain MIT 9313).